The chain runs to 95 residues: ESAT-6-like protein EsxH (95 aa).

This sequence belongs to the WXG100 family. ESAT-6 subfamily. As to quaternary structure, forms a tight 1:1 complex with EsxG.

It is found in the secreted. The protein is ESAT-6-like protein EsxH of Mycolicibacterium smegmatis (strain ATCC 700084 / mc(2)155) (Mycobacterium smegmatis).